We begin with the raw amino-acid sequence, 99 residues long: Class II hydrophobin B (99 aa).

The first 15 residues, 1-15 (MKFFAIAALFAGALA), serve as a signal peptide directing secretion. Intrachain disulfides connect C30/C79 and C40/C70.

The protein belongs to the cerato-ulmin hydrophobin family.

The protein localises to the secreted. It is found in the cell wall. The protein resides in the vacuole. It localises to the cytoplasmic vesicle. Functionally, aerial growth, conidiation, and dispersal of filamentous fungi in the environment rely upon a capability of their secreting small amphipathic proteins called hydrophobins (HPBs) with low sequence identity. Class I can self-assemble into an outermost layer of rodlet bundles on aerial cell surfaces, conferring cellular hydrophobicity that supports fungal growth, development and dispersal; whereas Class II form highly ordered films at water-air interfaces through intermolecular interactions but contribute nothing to the rodlet structure. Hyd2B contributes to certain cell wall-related features, such as hydrophobicity but is not involved in cell wall-related events during fungal proliferation in host hemocoel. Does not contribute to conidial hydrophobicity. Involved in insect hemocoel colonization independent of cell hydrophobicity. The protein is Class II hydrophobin B of Beauveria bassiana (strain ARSEF 2860) (White muscardine disease fungus).